The following is a 534-amino-acid chain: Ankyrin repeat domain-containing protein 34C (534 aa).

ANK repeat units follow at residues 10-39 (TDGN…YINE), 43-80 (KGET…DPNI), 84-114 (SGKT…DPSL), and 118-147 (TGAS…AKGK). Residues 159–205 (SGTKTTKQYLNVPPSPKVEDRQSPPLCTTPSDVELKTSGLASPPSEK) form a disordered region. Residue serine 301 is modified to Phosphoserine. 2 disordered regions span residues 332 to 368 (YEKG…LKDP) and 384 to 403 (QPVG…GPLD). Serine 446 is modified (phosphoserine). The segment at 480 to 503 (SKPASPLASGLKSMAPVAPNSPKR) is disordered.

The protein belongs to the ANKRD34 family.

This chain is Ankyrin repeat domain-containing protein 34C (Ankrd34c), found in Mus musculus (Mouse).